A 234-amino-acid chain; its full sequence is Orotate phosphoribosyltransferase (234 aa).

5-phospho-alpha-D-ribose 1-diphosphate is bound at residue K30. 38–39 serves as a coordination point for orotate; sequence FF. Residues 76–77, R103, K104, K107, H109, and 128–136 contribute to the 5-phospho-alpha-D-ribose 1-diphosphate site; these read YK and DDVITAGTA. T132 and R160 together coordinate orotate.

It belongs to the purine/pyrimidine phosphoribosyltransferase family. PyrE subfamily. Homodimer. The cofactor is Mg(2+).

It catalyses the reaction orotidine 5'-phosphate + diphosphate = orotate + 5-phospho-alpha-D-ribose 1-diphosphate. It functions in the pathway pyrimidine metabolism; UMP biosynthesis via de novo pathway; UMP from orotate: step 1/2. Functionally, catalyzes the transfer of a ribosyl phosphate group from 5-phosphoribose 1-diphosphate to orotate, leading to the formation of orotidine monophosphate (OMP). This Chromohalobacter salexigens (strain ATCC BAA-138 / DSM 3043 / CIP 106854 / NCIMB 13768 / 1H11) protein is Orotate phosphoribosyltransferase.